The primary structure comprises 160 residues: Transcription elongation factor GreA (160 aa).

The stretch at 1 to 72 (MAEKTYPMTL…QISSLETKIR (72 aa)) forms a coiled coil.

Belongs to the GreA/GreB family.

Functionally, necessary for efficient RNA polymerase transcription elongation past template-encoded arresting sites. The arresting sites in DNA have the property of trapping a certain fraction of elongating RNA polymerases that pass through, resulting in locked ternary complexes. Cleavage of the nascent transcript by cleavage factors such as GreA or GreB allows the resumption of elongation from the new 3'terminus. GreA releases sequences of 2 to 3 nucleotides. The protein is Transcription elongation factor GreA of Streptococcus pneumoniae (strain Hungary19A-6).